A 164-amino-acid chain; its full sequence is UPF0304 protein CKO_00501 (164 aa).

Belongs to the UPF0304 family.

This is UPF0304 protein CKO_00501 from Citrobacter koseri (strain ATCC BAA-895 / CDC 4225-83 / SGSC4696).